The primary structure comprises 156 residues: Aspartate carbamoyltransferase regulatory chain (156 aa).

Residues Cys110, Cys115, Cys140, and Cys143 each contribute to the Zn(2+) site.

This sequence belongs to the PyrI family. In terms of assembly, contains catalytic and regulatory chains. Zn(2+) serves as cofactor.

Involved in allosteric regulation of aspartate carbamoyltransferase. The polypeptide is Aspartate carbamoyltransferase regulatory chain (Methanocella arvoryzae (strain DSM 22066 / NBRC 105507 / MRE50)).